The following is a 433-amino-acid chain: Energy-coupling factor transporter ATP-binding protein EcfA2 (433 aa).

Positions 25–389 constitute an ABC transporter domain; sequence VRVKNLYAVY…QHIINSTSIQ (365 aa). 62-69 provides a ligand contact to ATP; the sequence is GNSGSGKS.

Belongs to the ABC transporter superfamily. Energy-coupling factor EcfA family. As to quaternary structure, forms a stable energy-coupling factor (ECF) transporter complex composed of 2 membrane-embedded substrate-binding proteins (S component), 2 ATP-binding proteins (A component) and 2 transmembrane proteins (T component).

The protein resides in the cell membrane. In terms of biological role, ATP-binding (A) component of a common energy-coupling factor (ECF) ABC-transporter complex. Unlike classic ABC transporters this ECF transporter provides the energy necessary to transport a number of different substrates. In Ureaplasma parvum serovar 3 (strain ATCC 700970), this protein is Energy-coupling factor transporter ATP-binding protein EcfA2.